Reading from the N-terminus, the 98-residue chain is Ubiquitin-related modifier 1 (98 aa).

A 1-thioglycine modification is found at G98. G98 is covalently cross-linked (Glycyl lysine isopeptide (Gly-Lys) (interchain with K-? in acceptor proteins)).

It belongs to the URM1 family. In terms of processing, C-terminal thiocarboxylation occurs in 2 steps, it is first acyl-adenylated (-COAMP) via the hesA/moeB/thiF part of UBA4, then thiocarboxylated (-COSH) via the rhodanese domain of UBA4.

The protein localises to the cytoplasm. The protein operates within tRNA modification; 5-methoxycarbonylmethyl-2-thiouridine-tRNA biosynthesis. In terms of biological role, acts as a sulfur carrier required for 2-thiolation of mcm(5)S(2)U at tRNA wobble positions of cytosolic tRNA(Lys), tRNA(Glu) and tRNA(Gln). Serves as sulfur donor in tRNA 2-thiolation reaction by being thiocarboxylated (-COSH) at its C-terminus by the MOCS3 homolog UBA4. The sulfur is then transferred to tRNA to form 2-thiolation of mcm(5)S(2)U. Prior mcm(5) tRNA modification by the elongator complex is required for 2-thiolation. Also acts as a ubiquitin-like protein (UBL) that is covalently conjugated via an isopeptide bond to lysine residues of target proteins such as AHP1. The thiocarboxylated form serves as substrate for conjugation and oxidative stress specifically induces the formation of UBL-protein conjugates. In Candida glabrata (strain ATCC 2001 / BCRC 20586 / JCM 3761 / NBRC 0622 / NRRL Y-65 / CBS 138) (Yeast), this protein is Ubiquitin-related modifier 1.